We begin with the raw amino-acid sequence, 472 residues long: UDP-N-acetylmuramate--L-alanine ligase (472 aa).

ATP is bound at residue 122–128; it reads GSHGKTT.

It belongs to the MurCDEF family.

It is found in the cytoplasm. The enzyme catalyses UDP-N-acetyl-alpha-D-muramate + L-alanine + ATP = UDP-N-acetyl-alpha-D-muramoyl-L-alanine + ADP + phosphate + H(+). It functions in the pathway cell wall biogenesis; peptidoglycan biosynthesis. Functionally, cell wall formation. This chain is UDP-N-acetylmuramate--L-alanine ligase, found in Myxococcus xanthus (strain DK1622).